An 85-amino-acid chain; its full sequence is UPF0386 protein RL2079 (85 aa).

The protein belongs to the UPF0386 family.

In Rhizobium johnstonii (strain DSM 114642 / LMG 32736 / 3841) (Rhizobium leguminosarum bv. viciae), this protein is UPF0386 protein RL2079.